A 473-amino-acid polypeptide reads, in one-letter code: Ribulose bisphosphate carboxylase large chain (473 aa).

Asparagine 116 and threonine 166 together coordinate substrate. Lysine 168 serves as the catalytic Proton acceptor. Residue lysine 170 participates in substrate binding. Mg(2+)-binding residues include lysine 194, aspartate 196, and glutamate 197. Lysine 194 carries the post-translational modification N6-carboxylysine. Histidine 287 (proton acceptor) is an active-site residue. Substrate-binding residues include arginine 288, histidine 320, and serine 372.

This sequence belongs to the RuBisCO large chain family. Type I subfamily. As to quaternary structure, heterohexadecamer of 8 large chains and 8 small chains. The cofactor is Mg(2+).

The catalysed reaction is 2 (2R)-3-phosphoglycerate + 2 H(+) = D-ribulose 1,5-bisphosphate + CO2 + H2O. It carries out the reaction D-ribulose 1,5-bisphosphate + O2 = 2-phosphoglycolate + (2R)-3-phosphoglycerate + 2 H(+). In terms of biological role, ruBisCO catalyzes two reactions: the carboxylation of D-ribulose 1,5-bisphosphate, the primary event in carbon dioxide fixation, as well as the oxidative fragmentation of the pentose substrate. Both reactions occur simultaneously and in competition at the same active site. The chain is Ribulose bisphosphate carboxylase large chain from Cupriavidus metallidurans (strain ATCC 43123 / DSM 2839 / NBRC 102507 / CH34) (Ralstonia metallidurans).